A 243-amino-acid chain; its full sequence is Ubiquinone/menaquinone biosynthesis C-methyltransferase UbiE (243 aa).

S-adenosyl-L-methionine contacts are provided by residues T69, D90, and 116–117; that span reads DA.

This sequence belongs to the class I-like SAM-binding methyltransferase superfamily. MenG/UbiE family.

The enzyme catalyses a 2-demethylmenaquinol + S-adenosyl-L-methionine = a menaquinol + S-adenosyl-L-homocysteine + H(+). It carries out the reaction a 2-methoxy-6-(all-trans-polyprenyl)benzene-1,4-diol + S-adenosyl-L-methionine = a 5-methoxy-2-methyl-3-(all-trans-polyprenyl)benzene-1,4-diol + S-adenosyl-L-homocysteine + H(+). It participates in quinol/quinone metabolism; menaquinone biosynthesis; menaquinol from 1,4-dihydroxy-2-naphthoate: step 2/2. The protein operates within cofactor biosynthesis; ubiquinone biosynthesis. Functionally, methyltransferase required for the conversion of demethylmenaquinol (DMKH2) to menaquinol (MKH2) and the conversion of 2-polyprenyl-6-methoxy-1,4-benzoquinol (DDMQH2) to 2-polyprenyl-3-methyl-6-methoxy-1,4-benzoquinol (DMQH2). The sequence is that of Ubiquinone/menaquinone biosynthesis C-methyltransferase UbiE from Cupriavidus metallidurans (strain ATCC 43123 / DSM 2839 / NBRC 102507 / CH34) (Ralstonia metallidurans).